A 205-amino-acid polypeptide reads, in one-letter code: Thiamine-phosphate synthase (205 aa).

Residues 37–41 (QVREK) and Asn-69 contribute to the 4-amino-2-methyl-5-(diphosphooxymethyl)pyrimidine site. Mg(2+) is bound by residues Asp-70 and Asp-89. Position 108 (Ser-108) interacts with 4-amino-2-methyl-5-(diphosphooxymethyl)pyrimidine. 134–136 (TGS) serves as a coordination point for 2-[(2R,5Z)-2-carboxy-4-methylthiazol-5(2H)-ylidene]ethyl phosphate. Lys-137 provides a ligand contact to 4-amino-2-methyl-5-(diphosphooxymethyl)pyrimidine. Residues Gly-165 and 185 to 186 (IS) contribute to the 2-[(2R,5Z)-2-carboxy-4-methylthiazol-5(2H)-ylidene]ethyl phosphate site.

It belongs to the thiamine-phosphate synthase family. Requires Mg(2+) as cofactor.

It carries out the reaction 2-[(2R,5Z)-2-carboxy-4-methylthiazol-5(2H)-ylidene]ethyl phosphate + 4-amino-2-methyl-5-(diphosphooxymethyl)pyrimidine + 2 H(+) = thiamine phosphate + CO2 + diphosphate. It catalyses the reaction 2-(2-carboxy-4-methylthiazol-5-yl)ethyl phosphate + 4-amino-2-methyl-5-(diphosphooxymethyl)pyrimidine + 2 H(+) = thiamine phosphate + CO2 + diphosphate. The enzyme catalyses 4-methyl-5-(2-phosphooxyethyl)-thiazole + 4-amino-2-methyl-5-(diphosphooxymethyl)pyrimidine + H(+) = thiamine phosphate + diphosphate. It functions in the pathway cofactor biosynthesis; thiamine diphosphate biosynthesis; thiamine phosphate from 4-amino-2-methyl-5-diphosphomethylpyrimidine and 4-methyl-5-(2-phosphoethyl)-thiazole: step 1/1. Functionally, condenses 4-methyl-5-(beta-hydroxyethyl)thiazole monophosphate (THZ-P) and 2-methyl-4-amino-5-hydroxymethyl pyrimidine pyrophosphate (HMP-PP) to form thiamine monophosphate (TMP). This is Thiamine-phosphate synthase from Clostridium botulinum (strain Kyoto / Type A2).